Reading from the N-terminus, the 1107-residue chain is Copine family protein 1 (1107 aa).

At 1 to 22 the chain is on the extracellular side; sequence MVFDARLGYDPDEWEECPEPEH. A helical membrane pass occupies residues 23–45; the sequence is FLVFSGFTRYMLTFAAIAFVYYF. Over 46-1107 the chain is Cytoplasmic; it reads FKLLDDKNKK…IRREMMHNPL (1062 aa). Positions 67-124 form a coiled coil; the sequence is VESVLAKAGDKLHDVKEQVQQHIPESAEELMREADQYLKEQAHSVQNNVHQFAEQAAN. Positions 478 to 488 are enriched in low complexity; the sequence is QLQQNQQQHQQ. Disordered regions lie at residues 478–501 and 673–698; these read QLQQ…TADS and HEPE…SRQV. Residues 492–501 are compositionally biased toward basic and acidic residues; the sequence is IDRRRTTADS. The span at 687–698 shows a compositional bias: polar residues; that stretch reads KNPSFEATSRQV. Positions 863–1023 constitute a VWFA domain; sequence NLIFGIDYTA…LSIIVVGVGD (161 aa).

It belongs to the copine family. As to quaternary structure, may interact (via VWFA domain) with unc-89 (via Ig-like C2-type 1-3) and unc-96 (via C-terminus); cpna-1 binding sites for unc-89 and unc-96 are different. May interact with pat-6. May interact with lim-9 (via LIM domains) and with scpl-1 (via FCP1 homology domain). Expressed in body wall muscles (at protein level).

The protein localises to the basal cell membrane. It is found in the cytoplasm. Its subcellular location is the myofibril. The protein resides in the sarcomere. It localises to the m line. Involved in the assembly of dense bodies and M lines during body wall muscle development. Acts by recruiting downstream of integrin-associated protein pat-6/actopaxin several dense bodies and M line components including unc-89, lim-9, scpl-1 and unc-96 to integrin-mediated attachment sites. The sequence is that of Copine family protein 1 from Caenorhabditis elegans.